Consider the following 152-residue polypeptide: D-erythrulose-4-phosphate isomerase 2 (152 aa).

Cysteine 70 acts as the Proton acceptor in catalysis.

It belongs to the LacAB/RpiB family.

The catalysed reaction is D-erythrulose 4-phosphate = D-erythrose 4-phosphate. The protein operates within carbohydrate metabolism; erythritol degradation. It participates in carbohydrate metabolism; D-threitol degradation. Its pathway is carbohydrate metabolism; L-threitol degradation. In terms of biological role, catalyzes the isomerization of D-erythrulose-4P to D-erythrose-4P. Involved in the degradation pathways of L-threitol, D-threitol and erythritol, that allow M.smegmatis to grow on these compounds as the sole carbon source. This is D-erythrulose-4-phosphate isomerase 2 from Mycolicibacterium smegmatis (strain ATCC 700084 / mc(2)155) (Mycobacterium smegmatis).